Reading from the N-terminus, the 305-residue chain is Tetraspanin-12 (305 aa).

The Cytoplasmic portion of the chain corresponds to 1–12 (MAREDSVKCLRC). Residues Cys-9 and Cys-12 are each lipidated (S-palmitoyl cysteine). Residues 13–33 (LLYALNLLFWLMSISVLAVSA) traverse the membrane as a helical segment. Residues 34–59 (WMRDYLNNVLTLTAETRVEEAVILTY) are Extracellular-facing. The chain crosses the membrane as a helical span at residues 60–80 (FPVVHPVMIAVCCFLIIVGML). Residues 81–89 (GYCGTVKRN) are Cytoplasmic-facing. Cys-83 carries the S-palmitoyl cysteine lipid modification. The chain crosses the membrane as a helical span at residues 90–110 (LLLLAWYFGSLLVIFCVELAC). The Extracellular portion of the chain corresponds to 111-224 (GVWTYEQELM…RGTKQLQVLR (114 aa)). A helical membrane pass occupies residues 225–245 (FLGISIGVTQILAMILTITLL). Residues 246–305 (WALYYDRREPGTDQMMSLKNDNSQHLSCPSVELLKPSLSRIFEHTSMANSFNTHFEMEEL) lie on the Cytoplasmic side of the membrane.

Belongs to the tetraspanin (TM4SF) family. As to quaternary structure, component of a complex, at least composed of TSPAN12, FZD4 and norrin (NDP). Interacts (when palmitoylated) with ADAM10. Interacts with MMP14/MT1-MMP. Post-translationally, palmitoylated; required for interaction with ADAM10. The precise position of palmitoylated residues is unclear and occurs either on Cys-9, Cys-12 and/or Cys-83.

Its subcellular location is the cell membrane. Regulator of cell surface receptor signal transduction. Plays a central role in retinal vascularization by regulating norrin (NDP) signal transduction. Acts in concert with norrin (NDP) to promote FZD4 multimerization and subsequent activation of FZD4, leading to promote accumulation of beta-catenin (CTNNB1) and stimulate LEF/TCF-mediated transcriptional programs. Suprisingly, it only activates the norrin (NDP)-dependent activation of FZD4, while it does not activate the Wnt-dependent activation of FZD4, suggesting the existence of a Wnt-independent signaling that also promote accumulation the beta-catenin (CTNNB1). Acts as a regulator of membrane proteinases such as ADAM10 and MMP14/MT1-MMP. Activates ADAM10-dependent cleavage activity of amyloid precursor protein (APP). Activates MMP14/MT1-MMP-dependent cleavage activity. The sequence is that of Tetraspanin-12 (TSPAN12) from Homo sapiens (Human).